Consider the following 373-residue polypeptide: tRNA-specific 2-thiouridylase MnmA (373 aa).

Residues 12–19 and Met-38 contribute to the ATP site; that span reads GMSGGVDS. The interval 98–100 is interaction with target base in tRNA; that stretch reads NPD. The Nucleophile role is filled by Cys-103. Cys-103 and Cys-200 are disulfide-bonded. Gly-127 contributes to the ATP binding site. Residues 150-152 are interaction with tRNA; that stretch reads KDQ. Catalysis depends on Cys-200, which acts as the Cysteine persulfide intermediate. The interval 312-313 is interaction with tRNA; the sequence is RY.

Belongs to the MnmA/TRMU family.

It localises to the cytoplasm. The enzyme catalyses S-sulfanyl-L-cysteinyl-[protein] + uridine(34) in tRNA + AH2 + ATP = 2-thiouridine(34) in tRNA + L-cysteinyl-[protein] + A + AMP + diphosphate + H(+). Catalyzes the 2-thiolation of uridine at the wobble position (U34) of tRNA, leading to the formation of s(2)U34. The polypeptide is tRNA-specific 2-thiouridylase MnmA (Streptococcus thermophilus (strain ATCC BAA-491 / LMD-9)).